The primary structure comprises 356 residues: uncharacterized protein (356 aa).

This is an uncharacterized protein from Bacillus subtilis (strain 168).